A 407-amino-acid chain; its full sequence is Bifunctional enzyme IspD/IspF (407 aa).

Residues 1–246 (MTEASENASA…SSERTHFPDI (246 aa)) form a 2-C-methyl-D-erythritol 4-phosphate cytidylyltransferase region. The interval 247-407 (RTGNGYDVHA…SVVFPGEVPE (161 aa)) is 2-C-methyl-D-erythritol 2,4-cyclodiphosphate synthase. A divalent metal cation contacts are provided by Asp253 and His255. Residues 253 to 255 (DVH) and 279 to 280 (HS) each bind 4-CDP-2-C-methyl-D-erythritol 2-phosphate. An a divalent metal cation-binding site is contributed by His287. Residues 301-303 (DIG), 377-380 (TTNE), Phe384, and Arg387 each bind 4-CDP-2-C-methyl-D-erythritol 2-phosphate.

It in the N-terminal section; belongs to the IspD/TarI cytidylyltransferase family. IspD subfamily. In the C-terminal section; belongs to the IspF family. The cofactor is a divalent metal cation.

It catalyses the reaction 2-C-methyl-D-erythritol 4-phosphate + CTP + H(+) = 4-CDP-2-C-methyl-D-erythritol + diphosphate. The catalysed reaction is 4-CDP-2-C-methyl-D-erythritol 2-phosphate = 2-C-methyl-D-erythritol 2,4-cyclic diphosphate + CMP. Its pathway is isoprenoid biosynthesis; isopentenyl diphosphate biosynthesis via DXP pathway; isopentenyl diphosphate from 1-deoxy-D-xylulose 5-phosphate: step 2/6. The protein operates within isoprenoid biosynthesis; isopentenyl diphosphate biosynthesis via DXP pathway; isopentenyl diphosphate from 1-deoxy-D-xylulose 5-phosphate: step 4/6. In terms of biological role, bifunctional enzyme that catalyzes the formation of 4-diphosphocytidyl-2-C-methyl-D-erythritol from CTP and 2-C-methyl-D-erythritol 4-phosphate (MEP) (IspD), and catalyzes the conversion of 4-diphosphocytidyl-2-C-methyl-D-erythritol 2-phosphate (CDP-ME2P) to 2-C-methyl-D-erythritol 2,4-cyclodiphosphate (ME-CPP) with a corresponding release of cytidine 5-monophosphate (CMP) (IspF). The protein is Bifunctional enzyme IspD/IspF of Mesorhizobium japonicum (strain LMG 29417 / CECT 9101 / MAFF 303099) (Mesorhizobium loti (strain MAFF 303099)).